Here is a 366-residue protein sequence, read N- to C-terminus: Molybdopterin synthase catalytic subunit (366 aa).

Substrate-binding positions include 101–102, Lys117, and 124–126; these read HR and KKE.

This sequence belongs to the MoaE family. MOCS2B subfamily. In terms of assembly, heterotetramer; composed of 2 small (Mocs2A) and 2 large (Mocs2B) subunits.

It is found in the cytoplasm. It catalyses the reaction 2 [molybdopterin-synthase sulfur-carrier protein]-C-terminal-Gly-aminoethanethioate + cyclic pyranopterin phosphate + H2O = molybdopterin + 2 [molybdopterin-synthase sulfur-carrier protein]-C-terminal Gly-Gly + 2 H(+). It participates in cofactor biosynthesis; molybdopterin biosynthesis. In terms of biological role, catalytic subunit of the molybdopterin synthase complex, a complex that catalyzes the conversion of precursor Z into molybdopterin. Acts by mediating the incorporation of 2 sulfur atoms from thiocarboxylated Mocs2A into precursor Z to generate a dithiolene group. The protein is Molybdopterin synthase catalytic subunit of Drosophila mojavensis (Fruit fly).